Reading from the N-terminus, the 570-residue chain is Proline--tRNA ligase (570 aa).

This sequence belongs to the class-II aminoacyl-tRNA synthetase family. ProS type 1 subfamily. Homodimer.

Its subcellular location is the cytoplasm. The catalysed reaction is tRNA(Pro) + L-proline + ATP = L-prolyl-tRNA(Pro) + AMP + diphosphate. Its function is as follows. Catalyzes the attachment of proline to tRNA(Pro) in a two-step reaction: proline is first activated by ATP to form Pro-AMP and then transferred to the acceptor end of tRNA(Pro). As ProRS can inadvertently accommodate and process non-cognate amino acids such as alanine and cysteine, to avoid such errors it has two additional distinct editing activities against alanine. One activity is designated as 'pretransfer' editing and involves the tRNA(Pro)-independent hydrolysis of activated Ala-AMP. The other activity is designated 'posttransfer' editing and involves deacylation of mischarged Ala-tRNA(Pro). The misacylated Cys-tRNA(Pro) is not edited by ProRS. The protein is Proline--tRNA ligase of Geotalea daltonii (strain DSM 22248 / JCM 15807 / FRC-32) (Geobacter daltonii).